A 315-amino-acid chain; its full sequence is 4-hydroxy-3-methylbut-2-enyl diphosphate reductase (315 aa).

C12 is a binding site for [4Fe-4S] cluster. Residues H43 and H81 each contribute to the (2E)-4-hydroxy-3-methylbut-2-enyl diphosphate site. Residues H43 and H81 each contribute to the dimethylallyl diphosphate site. The isopentenyl diphosphate site is built by H43 and H81. Position 103 (C103) interacts with [4Fe-4S] cluster. H131 provides a ligand contact to (2E)-4-hydroxy-3-methylbut-2-enyl diphosphate. A dimethylallyl diphosphate-binding site is contributed by H131. H131 contributes to the isopentenyl diphosphate binding site. The Proton donor role is filled by E133. Position 170 (T170) interacts with (2E)-4-hydroxy-3-methylbut-2-enyl diphosphate. C198 lines the [4Fe-4S] cluster pocket. 3 residues coordinate (2E)-4-hydroxy-3-methylbut-2-enyl diphosphate: S226, N228, and S271. S226, N228, and S271 together coordinate dimethylallyl diphosphate. 3 residues coordinate isopentenyl diphosphate: S226, N228, and S271.

This sequence belongs to the IspH family. It depends on [4Fe-4S] cluster as a cofactor.

It catalyses the reaction isopentenyl diphosphate + 2 oxidized [2Fe-2S]-[ferredoxin] + H2O = (2E)-4-hydroxy-3-methylbut-2-enyl diphosphate + 2 reduced [2Fe-2S]-[ferredoxin] + 2 H(+). It carries out the reaction dimethylallyl diphosphate + 2 oxidized [2Fe-2S]-[ferredoxin] + H2O = (2E)-4-hydroxy-3-methylbut-2-enyl diphosphate + 2 reduced [2Fe-2S]-[ferredoxin] + 2 H(+). The protein operates within isoprenoid biosynthesis; dimethylallyl diphosphate biosynthesis; dimethylallyl diphosphate from (2E)-4-hydroxy-3-methylbutenyl diphosphate: step 1/1. It participates in isoprenoid biosynthesis; isopentenyl diphosphate biosynthesis via DXP pathway; isopentenyl diphosphate from 1-deoxy-D-xylulose 5-phosphate: step 6/6. Catalyzes the conversion of 1-hydroxy-2-methyl-2-(E)-butenyl 4-diphosphate (HMBPP) into a mixture of isopentenyl diphosphate (IPP) and dimethylallyl diphosphate (DMAPP). Acts in the terminal step of the DOXP/MEP pathway for isoprenoid precursor biosynthesis. The chain is 4-hydroxy-3-methylbut-2-enyl diphosphate reductase from Bacillus cytotoxicus (strain DSM 22905 / CIP 110041 / 391-98 / NVH 391-98).